The chain runs to 355 residues: MALRLLKLAATSASARVVAAGAQRVRGVHSSVQCKLRYGMWHFLLGDKASKRLTERSRVITVDGNICTGKGKLAKEIAEKLGFKHFPEAGIHYPDSTTGDGKPLAADYNGNCSLEKFYDDPRSNDGNSYRLQSWLYSSRLLQYSDALEHLLTTGQGVVLERSIFSDFVFLEAMYNQGFIRKQCVDHYNEVKSVTICDYLPPHLVIYIDVPVPEVQRRIQKKGDPHEMKITSAYLQDIENAYKKTFLPEMSEKCEVLQYSAREAQDSKKAVEDIEYLKFDKGPWLKQDNRTLYHLRLLVQDKFEVLNYTSIPIFLPEVTIGAHQTDRVLHQFRELPGRKYSPGYNTEVGDKWIWLK.

The transit peptide at 1 to 35 (MALRLLKLAATSASARVVAAGAQRVRGVHSSVQCK) directs the protein to the mitochondrion. The residue at position 250 (S250) is a Phosphoserine; by PINK1. Residue K285 is modified to N6-succinyllysine.

The protein belongs to the complex I NDUFA10 subunit family. As to quaternary structure, complex I is composed of 45 different subunits. This a component of the hydrophobic protein fraction. Requires FAD as cofactor. In terms of processing, phosphorylation at Ser-250 by PINK1 is required for the binding and/or reduction of the complex I substrate ubiquinone.

It is found in the mitochondrion matrix. Its function is as follows. Accessory subunit of the mitochondrial membrane respiratory chain NADH dehydrogenase (Complex I), that is believed not to be involved in catalysis. Complex I functions in the transfer of electrons from NADH to the respiratory chain. The immediate electron acceptor for the enzyme is believed to be ubiquinone. The protein is NADH dehydrogenase [ubiquinone] 1 alpha subcomplex subunit 10, mitochondrial (NDUFA10) of Pan troglodytes (Chimpanzee).